The primary structure comprises 354 residues: Histidinol-phosphate aminotransferase (354 aa).

N6-(pyridoxal phosphate)lysine is present on Lys-222.

It belongs to the class-II pyridoxal-phosphate-dependent aminotransferase family. Histidinol-phosphate aminotransferase subfamily. As to quaternary structure, homodimer. The cofactor is pyridoxal 5'-phosphate.

The catalysed reaction is L-histidinol phosphate + 2-oxoglutarate = 3-(imidazol-4-yl)-2-oxopropyl phosphate + L-glutamate. The protein operates within amino-acid biosynthesis; L-histidine biosynthesis; L-histidine from 5-phospho-alpha-D-ribose 1-diphosphate: step 7/9. In Leuconostoc citreum (strain KM20), this protein is Histidinol-phosphate aminotransferase.